The primary structure comprises 44 residues: U4-ctenitoxin-Co1a (44 aa).

4 disulfides stabilise this stretch: Cys-2–Cys-19, Cys-9–Cys-25, Cys-18–Cys-39, and Cys-27–Cys-37.

In terms of tissue distribution, expressed by the venom gland.

The protein localises to the secreted. In terms of biological role, omega-agatoxins are antagonists of voltage-gated calcium channels (Cav). Toxic to mice by intracerebroventricular injection. This Ctenus ornatus (Brazilian spider) protein is U4-ctenitoxin-Co1a.